The primary structure comprises 271 residues: Putative phosphoenolpyruvate synthase regulatory protein (271 aa).

152–159 is an ADP binding site; the sequence is GVSRCGKT.

Belongs to the pyruvate, phosphate/water dikinase regulatory protein family. PSRP subfamily.

It catalyses the reaction [pyruvate, water dikinase] + ADP = [pyruvate, water dikinase]-phosphate + AMP + H(+). The catalysed reaction is [pyruvate, water dikinase]-phosphate + phosphate + H(+) = [pyruvate, water dikinase] + diphosphate. Functionally, bifunctional serine/threonine kinase and phosphorylase involved in the regulation of the phosphoenolpyruvate synthase (PEPS) by catalyzing its phosphorylation/dephosphorylation. This Legionella pneumophila (strain Corby) protein is Putative phosphoenolpyruvate synthase regulatory protein.